Consider the following 833-residue polypeptide: Lon protease (833 aa).

The Lon N-terminal domain maps to 3-198 (YPFMATRGVI…LIFSFLVELK (196 aa)). Residue 390 to 397 (GPPGTGKT) coordinates ATP. One can recognise a Lon proteolytic domain in the interval 627–808 (YERIGAVNGL…DEIFENLFGK (182 aa)). Catalysis depends on residues Ser-714 and Lys-757.

This sequence belongs to the peptidase S16 family. As to quaternary structure, homohexamer. Organized in a ring with a central cavity.

The protein resides in the cytoplasm. The catalysed reaction is Hydrolysis of proteins in presence of ATP.. In terms of biological role, ATP-dependent serine protease that mediates the selective degradation of mutant and abnormal proteins as well as certain short-lived regulatory proteins. Required for cellular homeostasis and for survival from DNA damage and developmental changes induced by stress. Degrades polypeptides processively to yield small peptide fragments that are 5 to 10 amino acids long. Binds to DNA in a double-stranded, site-specific manner. The protein is Lon protease of Mycoplasma mobile (strain ATCC 43663 / 163K / NCTC 11711) (Mesomycoplasma mobile).